Consider the following 475-residue polypeptide: Ankyrin repeat, SAM and basic leucine zipper domain-containing protein 1 (475 aa).

The tract at residues 1–24 is disordered; it reads MAASALRGPPVAGGGESSESEDDG. Residues Ser17, Ser18, and Ser20 each carry the phosphoserine modification. ANK repeat units follow at residues 45–74, 78–107, 110–144, 148–177, 181–210, and 214–243; these read EKKE…SVDS, YGWT…NASF, DKQS…DPNV, RLMT…EVNT, NGYT…NKML, and DGKM…PLEG. One can recognise an SAM domain in the interval 272–334; the sequence is SYTAFGDLEV…KILAALKELQ (63 aa).

Interacts with DDX4, PIWIL1, RANBP9 and TDRD1.

The protein localises to the cytoplasm. In terms of biological role, plays a central role during spermatogenesis by repressing transposable elements and preventing their mobilization, which is essential for the germline integrity. Acts via the piRNA metabolic process, which mediates the repression of transposable elements during meiosis by forming complexes composed of piRNAs and Piwi proteins and governs the methylation and subsequent repression of transposons. Its association with pi-bodies suggests a participation in the primary piRNAs metabolic process. Required prior to the pachytene stage to facilitate the production of multiple types of piRNAs, including those associated with repeats involved in the regulation of retrotransposons. May act by mediating protein-protein interactions during germ cell maturation. This chain is Ankyrin repeat, SAM and basic leucine zipper domain-containing protein 1 (ASZ1), found in Gorilla gorilla gorilla (Western lowland gorilla).